The chain runs to 117 residues: Large ribosomal subunit protein bL20c (117 aa).

Belongs to the bacterial ribosomal protein bL20 family.

It localises to the plastid. It is found in the chloroplast. Its function is as follows. Binds directly to 23S ribosomal RNA and is necessary for the in vitro assembly process of the 50S ribosomal subunit. It is not involved in the protein synthesizing functions of that subunit. In Barbarea verna (Land cress), this protein is Large ribosomal subunit protein bL20c.